The chain runs to 154 residues: Transcriptional repressor NrdR (154 aa).

The interval 1–22 (MECPNCHKNASRVIDSRPSDEN) is disordered. A zinc finger spans residues 3-34 (CPNCHKNASRVIDSRPSDENRAIRRRRECENC). Residues 49 to 139 (LLVIKNDGTR…IYRQFKDVSG (91 aa)) enclose the ATP-cone domain.

This sequence belongs to the NrdR family. Zn(2+) serves as cofactor.

In terms of biological role, negatively regulates transcription of bacterial ribonucleotide reductase nrd genes and operons by binding to NrdR-boxes. The sequence is that of Transcriptional repressor NrdR from Lactobacillus gasseri (strain ATCC 33323 / DSM 20243 / BCRC 14619 / CIP 102991 / JCM 1131 / KCTC 3163 / NCIMB 11718 / NCTC 13722 / AM63).